The sequence spans 643 residues: 1-deoxy-D-xylulose-5-phosphate synthase (643 aa).

Thiamine diphosphate-binding positions include His-78 and 119–121; that span reads AHS. Asp-150 serves as a coordination point for Mg(2+). Residues 151–152, Asn-179, Tyr-288, and Glu-370 contribute to the thiamine diphosphate site; that span reads GS. Asn-179 provides a ligand contact to Mg(2+).

It belongs to the transketolase family. DXPS subfamily. Homodimer. The cofactor is Mg(2+). Thiamine diphosphate serves as cofactor.

The catalysed reaction is D-glyceraldehyde 3-phosphate + pyruvate + H(+) = 1-deoxy-D-xylulose 5-phosphate + CO2. It participates in metabolic intermediate biosynthesis; 1-deoxy-D-xylulose 5-phosphate biosynthesis; 1-deoxy-D-xylulose 5-phosphate from D-glyceraldehyde 3-phosphate and pyruvate: step 1/1. Catalyzes the acyloin condensation reaction between C atoms 2 and 3 of pyruvate and glyceraldehyde 3-phosphate to yield 1-deoxy-D-xylulose-5-phosphate (DXP). This Brucella canis (strain ATCC 23365 / NCTC 10854 / RM-666) protein is 1-deoxy-D-xylulose-5-phosphate synthase.